A 334-amino-acid chain; its full sequence is Ornithine carbamoyltransferase (334 aa).

Carbamoyl phosphate-binding positions include 57-60, Gln84, Arg108, and 135-138; these read STRT and HPTQ. L-ornithine contacts are provided by residues Asn169, Asp233, and 237-238; that span reads SM. Carbamoyl phosphate contacts are provided by residues 275–276 and Arg320; that span reads CL.

This sequence belongs to the aspartate/ornithine carbamoyltransferase superfamily. OTCase family.

The protein localises to the cytoplasm. The catalysed reaction is carbamoyl phosphate + L-ornithine = L-citrulline + phosphate + H(+). The protein operates within amino-acid biosynthesis; L-arginine biosynthesis; L-arginine from L-ornithine and carbamoyl phosphate: step 1/3. In terms of biological role, reversibly catalyzes the transfer of the carbamoyl group from carbamoyl phosphate (CP) to the N(epsilon) atom of ornithine (ORN) to produce L-citrulline. The chain is Ornithine carbamoyltransferase from Vibrio vulnificus (strain YJ016).